The sequence spans 871 residues: Mitochondrial 15S rRNA processing factor CCM1 (871 aa).

Residues 1 to 72 (MLGRRLAGAK…EFKLRQLREF (72 aa)) constitute a mitochondrion transit peptide. PPR repeat units lie at residues 333 to 369 (NKEN…DHKP) and 370 to 404 (DAKT…KVDP). A disordered region spans residues 704–724 (RPGSSTHLTHSEIKKQPSSQT).

The protein belongs to the CCM1 family. In terms of assembly, binds to mitochondrial small subunit 15S rRNA.

The protein resides in the mitochondrion. In terms of biological role, regulates mitochondrial small subunit maturation by controlling 15S rRNA 5'-end processing. Localizes to the 5' precursor of the 15S rRNA in a position that is subsequently occupied by mS47 in the mature yeast mtSSU. Uses structure and sequence-specific RNA recognition, binding to a single-stranded region of the precursor and specifically recognizing bases -6 to -1. The exchange of Ccm1 for mS47 is coupled to the irreversible removal of precursor rRNA that is accompanied by conformational changes of the mitoribosomal proteins uS5m and mS26. These conformational changes signal completion of 5'-end rRNA processing through protection of the mature 5'-end of the 15S rRNA and stabilization of mS47. The removal of the 5' precursor together with the dissociation of Ccm1 may be catalyzed by the 5'-3' exoribonuclease Pet127. Involved in the specific removal of group I introns in mitochondrial encoded transcripts. The polypeptide is Mitochondrial 15S rRNA processing factor CCM1 (CCM1) (Lachancea thermotolerans (strain ATCC 56472 / CBS 6340 / NRRL Y-8284) (Yeast)).